Reading from the N-terminus, the 437-residue chain is FK506-binding protein 3 (437 aa).

3 stretches are compositionally biased toward acidic residues: residues 73–90 (DIEA…EEEE), 106–131 (EEEE…EDVS), and 179–220 (ADED…DASD). Disordered stretches follow at residues 73–132 (DIEA…DVSE) and 169–349 (HLTG…QTAK). 2 stretches are compositionally biased toward basic and acidic residues: residues 256–270 (KKED…KDLE) and 292–324 (AKKE…EASK). Residues 351-437 (GNKVGIRYIG…TFDIKLVSIK (87 aa)) enclose the PPIase FKBP-type domain.

Belongs to the FKBP-type PPIase family. FKBP3/4 subfamily.

It is found in the nucleus. The protein localises to the nucleolus. The enzyme catalyses [protein]-peptidylproline (omega=180) = [protein]-peptidylproline (omega=0). With respect to regulation, inhibited by both FK506 and rapamycin. Functionally, PPIases accelerate the folding of proteins. It catalyzes the cis-trans isomerization of proline imidic peptide bonds in oligopeptides. The chain is FK506-binding protein 3 (FPR3) from Debaryomyces hansenii (strain ATCC 36239 / CBS 767 / BCRC 21394 / JCM 1990 / NBRC 0083 / IGC 2968) (Yeast).